A 264-amino-acid chain; its full sequence is Thymidylate synthase (264 aa).

Arg-21 lines the dUMP pocket. His-51 contributes to the (6R)-5,10-methylene-5,6,7,8-tetrahydrofolate binding site. Residue 126–127 (RR) coordinates dUMP. The Nucleophile role is filled by Cys-146. DUMP contacts are provided by residues 166–169 (RSAD), Asn-177, and 207–209 (HIY). Asp-169 contacts (6R)-5,10-methylene-5,6,7,8-tetrahydrofolate. Ala-263 is a binding site for (6R)-5,10-methylene-5,6,7,8-tetrahydrofolate.

The protein belongs to the thymidylate synthase family. Bacterial-type ThyA subfamily. In terms of assembly, homodimer.

It is found in the cytoplasm. It catalyses the reaction dUMP + (6R)-5,10-methylene-5,6,7,8-tetrahydrofolate = 7,8-dihydrofolate + dTMP. Its pathway is pyrimidine metabolism; dTTP biosynthesis. Functionally, catalyzes the reductive methylation of 2'-deoxyuridine-5'-monophosphate (dUMP) to 2'-deoxythymidine-5'-monophosphate (dTMP) while utilizing 5,10-methylenetetrahydrofolate (mTHF) as the methyl donor and reductant in the reaction, yielding dihydrofolate (DHF) as a by-product. This enzymatic reaction provides an intracellular de novo source of dTMP, an essential precursor for DNA biosynthesis. In Ruthia magnifica subsp. Calyptogena magnifica, this protein is Thymidylate synthase.